Consider the following 89-residue polypeptide: Small ribosomal subunit protein uS15 (89 aa).

This sequence belongs to the universal ribosomal protein uS15 family. Part of the 30S ribosomal subunit. Forms a bridge to the 50S subunit in the 70S ribosome, contacting the 23S rRNA.

One of the primary rRNA binding proteins, it binds directly to 16S rRNA where it helps nucleate assembly of the platform of the 30S subunit by binding and bridging several RNA helices of the 16S rRNA. Functionally, forms an intersubunit bridge (bridge B4) with the 23S rRNA of the 50S subunit in the ribosome. The chain is Small ribosomal subunit protein uS15 from Renibacterium salmoninarum (strain ATCC 33209 / DSM 20767 / JCM 11484 / NBRC 15589 / NCIMB 2235).